The sequence spans 189 residues: Small heat shock protein 21 (189 aa).

The segment at 26–53 is disordered; the sequence is PPNFNPRKIAQGDNGKGQQVSRYGAGAG. Positions 77–183 constitute a sHSP domain; sequence KYFVGFDDNV…HEKIVNIPIS (107 aa).

The protein belongs to the small heat shock protein (HSP20) family.

Functionally, heat shock protein required for pathogenicity. Mediates thermotolerance and adaptation to oxidative stress and ethanol-induced stress. Required for invasive growth and filament formation under various filament inducing conditions. Plays a role in the capacity of damaging human-derived endothelial and oral epithelial cells during infection. Potentiates resistance to antifungal drugs, as well as resistance to killing by human neutrophils. Plays a major role in trehalose homeostasis in response to elevated temperatures. Regulates CEK1 activation by phosphorylation in response to elevated temperatures. The protein is Small heat shock protein 21 (HSP21) of Candida albicans (strain SC5314 / ATCC MYA-2876) (Yeast).